A 213-amino-acid polypeptide reads, in one-letter code: Imidazole glycerol phosphate synthase subunit HisH (213 aa).

The Glutamine amidotransferase type-1 domain maps to 4–211 (NIGLIDYGMG…LAWLKKETKD (208 aa)). Catalysis depends on C82, which acts as the Nucleophile. Residues H186 and E188 contribute to the active site.

In terms of assembly, heterodimer of HisH and HisF.

It is found in the cytoplasm. It carries out the reaction 5-[(5-phospho-1-deoxy-D-ribulos-1-ylimino)methylamino]-1-(5-phospho-beta-D-ribosyl)imidazole-4-carboxamide + L-glutamine = D-erythro-1-(imidazol-4-yl)glycerol 3-phosphate + 5-amino-1-(5-phospho-beta-D-ribosyl)imidazole-4-carboxamide + L-glutamate + H(+). The enzyme catalyses L-glutamine + H2O = L-glutamate + NH4(+). It participates in amino-acid biosynthesis; L-histidine biosynthesis; L-histidine from 5-phospho-alpha-D-ribose 1-diphosphate: step 5/9. Its function is as follows. IGPS catalyzes the conversion of PRFAR and glutamine to IGP, AICAR and glutamate. The HisH subunit catalyzes the hydrolysis of glutamine to glutamate and ammonia as part of the synthesis of IGP and AICAR. The resulting ammonia molecule is channeled to the active site of HisF. The polypeptide is Imidazole glycerol phosphate synthase subunit HisH (Prochlorococcus marinus (strain SARG / CCMP1375 / SS120)).